Consider the following 1239-residue polypeptide: Erythroid differentiation-related factor 1 (1239 aa).

4 disordered regions span residues 1-39 (MGDP…QGSA), 219-269 (AQPV…REPL), 517-559 (PKKE…DPAD), and 620-646 (KKES…TRGG). 2 stretches are compositionally biased toward low complexity: residues 9 to 28 (AEAS…LSQA) and 253 to 263 (SSVSEDPSASS). Positions 530-547 (NSDESYSEEEEEMADSDE) are enriched in acidic residues. 2 TPR repeats span residues 693–726 (SKAY…HDTY) and 914–953 (AQAH…LGTR).

The protein localises to the nucleus. Its function is as follows. Transcription factor involved in erythroid differentiation. Involved in transcriptional activation of the globin gene. In Mus musculus (Mouse), this protein is Erythroid differentiation-related factor 1 (Edrf1).